Here is a 186-residue protein sequence, read N- to C-terminus: Peptidyl-tRNA hydrolase (186 aa).

Tyrosine 14 is a binding site for tRNA. Histidine 19 serves as the catalytic Proton acceptor. Residues phenylalanine 64, asparagine 66, and asparagine 112 each contribute to the tRNA site.

The protein belongs to the PTH family. As to quaternary structure, monomer.

The protein resides in the cytoplasm. It carries out the reaction an N-acyl-L-alpha-aminoacyl-tRNA + H2O = an N-acyl-L-amino acid + a tRNA + H(+). Functionally, hydrolyzes ribosome-free peptidyl-tRNAs (with 1 or more amino acids incorporated), which drop off the ribosome during protein synthesis, or as a result of ribosome stalling. In terms of biological role, catalyzes the release of premature peptidyl moieties from peptidyl-tRNA molecules trapped in stalled 50S ribosomal subunits, and thus maintains levels of free tRNAs and 50S ribosomes. This is Peptidyl-tRNA hydrolase from Listeria monocytogenes serovar 1/2a (strain ATCC BAA-679 / EGD-e).